A 277-amino-acid polypeptide reads, in one-letter code: Phosphatidylserine decarboxylase proenzyme (277 aa).

Residues D88, H144, and S242 each act as charge relay system; for autoendoproteolytic cleavage activity in the active site. The Schiff-base intermediate with substrate; via pyruvic acid; for decarboxylase activity role is filled by S242. S242 bears the Pyruvic acid (Ser); by autocatalysis mark.

It belongs to the phosphatidylserine decarboxylase family. PSD-B subfamily. Prokaryotic type I sub-subfamily. As to quaternary structure, heterodimer of a large membrane-associated beta subunit and a small pyruvoyl-containing alpha subunit. The cofactor is pyruvate. Post-translationally, is synthesized initially as an inactive proenzyme. Formation of the active enzyme involves a self-maturation process in which the active site pyruvoyl group is generated from an internal serine residue via an autocatalytic post-translational modification. Two non-identical subunits are generated from the proenzyme in this reaction, and the pyruvate is formed at the N-terminus of the alpha chain, which is derived from the carboxyl end of the proenzyme. The autoendoproteolytic cleavage occurs by a canonical serine protease mechanism, in which the side chain hydroxyl group of the serine supplies its oxygen atom to form the C-terminus of the beta chain, while the remainder of the serine residue undergoes an oxidative deamination to produce ammonia and the pyruvoyl prosthetic group on the alpha chain. During this reaction, the Ser that is part of the protease active site of the proenzyme becomes the pyruvoyl prosthetic group, which constitutes an essential element of the active site of the mature decarboxylase.

The protein localises to the cell membrane. It carries out the reaction a 1,2-diacyl-sn-glycero-3-phospho-L-serine + H(+) = a 1,2-diacyl-sn-glycero-3-phosphoethanolamine + CO2. Its pathway is phospholipid metabolism; phosphatidylethanolamine biosynthesis; phosphatidylethanolamine from CDP-diacylglycerol: step 2/2. In terms of biological role, catalyzes the formation of phosphatidylethanolamine (PtdEtn) from phosphatidylserine (PtdSer). This Psychrobacter cryohalolentis (strain ATCC BAA-1226 / DSM 17306 / VKM B-2378 / K5) protein is Phosphatidylserine decarboxylase proenzyme.